The chain runs to 386 residues: S-(hydroxymethyl)glutathione dehydrogenase (386 aa).

Serine 2 is subject to N-acetylserine. Cysteine 49 serves as a coordination point for Zn(2+). Histidine 50 serves as a coordination point for NAD(+). Positions 71, 72, 101, 104, 107, 115, and 179 each coordinate Zn(2+). Residues 204 to 209, aspartate 228, 300 to 302, and 325 to 327 each bind NAD(+); these read GCGTVG, IGV, and SAF.

The protein belongs to the zinc-containing alcohol dehydrogenase family. Class-III subfamily. It depends on Zn(2+) as a cofactor.

It is found in the cytoplasm. Its subcellular location is the mitochondrion. The catalysed reaction is a primary alcohol + NAD(+) = an aldehyde + NADH + H(+). It carries out the reaction a secondary alcohol + NAD(+) = a ketone + NADH + H(+). It catalyses the reaction S-(hydroxymethyl)glutathione + NADP(+) = S-formylglutathione + NADPH + H(+). The enzyme catalyses S-(hydroxymethyl)glutathione + NAD(+) = S-formylglutathione + NADH + H(+). The catalysed reaction is S-nitrosoglutathione + NADH + H(+) = S-(hydroxysulfenamide)glutathione + NAD(+). Functionally, oxidizes long-chain alcohols and, in the presence of glutathione, is able to oxidize formaldehyde. Is responsible for yeast resistance to formaldehyde. Also acts as a S-nitroso-glutathione reductase by catalyzing the NADH-dependent reduction of S-nitrosoglutathione, thereby regulating protein S-nitrosylation. The protein is S-(hydroxymethyl)glutathione dehydrogenase (SFA1) of Saccharomyces cerevisiae (strain ATCC 204508 / S288c) (Baker's yeast).